A 44-amino-acid polypeptide reads, in one-letter code: uncharacterized protein (44 aa).

This is an uncharacterized protein from Bacillus phage phi105 (Bacteriophage phi-105).